The following is a 122-amino-acid chain: Large ribosomal subunit protein uL14 (122 aa).

It belongs to the universal ribosomal protein uL14 family. In terms of assembly, part of the 50S ribosomal subunit. Forms a cluster with proteins L3 and L19. In the 70S ribosome, L14 and L19 interact and together make contacts with the 16S rRNA in bridges B5 and B8.

Functionally, binds to 23S rRNA. Forms part of two intersubunit bridges in the 70S ribosome. The chain is Large ribosomal subunit protein uL14 from Psychromonas ingrahamii (strain DSM 17664 / CCUG 51855 / 37).